The following is an 88-amino-acid chain: Yop proteins translocation protein S (88 aa).

A run of 2 helical transmembrane segments spans residues W15–V35 and L49–L69.

This sequence belongs to the FliQ/MopD/SpaQ family.

The protein localises to the cell membrane. In terms of biological role, component of the Yop secretion machinery. This chain is Yop proteins translocation protein S (yscS), found in Yersinia pestis.